The sequence spans 125 residues: SOSS complex subunit C homolog (125 aa).

The disordered stretch occupies residues 43–77 (MPSPQLLGQPTVAPEFLPQGVGLPTNATPPRSAFN). The span at 67–77 (TNATPPRSAFN) shows a compositional bias: polar residues.

This sequence belongs to the SOSS-C family.

The sequence is that of SOSS complex subunit C homolog from Drosophila persimilis (Fruit fly).